We begin with the raw amino-acid sequence, 441 residues long: Squalene synthase (441 aa).

2 helical membrane passes run 293–313 (SFQF…LVFG) and 420–440 (FKFN…YWYA).

Belongs to the phytoene/squalene synthase family. Mg(2+) serves as cofactor.

It is found in the endoplasmic reticulum membrane. The catalysed reaction is 2 (2E,6E)-farnesyl diphosphate + NADPH + H(+) = squalene + 2 diphosphate + NADP(+). The enzyme catalyses 2 (2E,6E)-farnesyl diphosphate + NADH + H(+) = squalene + 2 diphosphate + NAD(+). The protein operates within terpene metabolism; lanosterol biosynthesis; lanosterol from farnesyl diphosphate: step 1/3. Its function is as follows. Catalyzes the condensation of 2 two farnesyl pyrophosphate moieties to form squalene. It is the first committed enzyme of the sterol biosynthesis pathway. Required for the biosynthesis of ergosterol. The chain is Squalene synthase (ERG9) from Eremothecium gossypii (strain ATCC 10895 / CBS 109.51 / FGSC 9923 / NRRL Y-1056) (Yeast).